Here is a 2083-residue protein sequence, read N- to C-terminus: Nonribosomal peptide synthetase sidD (2083 aa).

The adenylation 1 stretch occupies residues threonine 251–arginine 650. The region spanning arginine 764–aspartate 840 is the Carrier 1 domain. Serine 801 bears the O-(pantetheine 4'-phosphoryl)serine mark. The condensation 1 stretch occupies residues glutamate 876–isoleucine 1146. The tract at residues leucine 1336 to histidine 1421 is adenylation 2. The 77-residue stretch at asparagine 1557–glutamate 1633 folds into the Carrier 2 domain. At serine 1594 the chain carries O-(pantetheine 4'-phosphoryl)serine. A condensation 2 region spans residues aspartate 1674 to phenylalanine 1946.

The protein belongs to the NRP synthetase family.

It functions in the pathway siderophore biosynthesis. Nonribosomal peptide synthetase; part of the siderophore biosynthetic pathway. Aspergillus fumigatus produces four types of siderophores, low-molecular-mass iron chelators, including excreted fusarinine C (FsC) and triacetylfusarinine C (TAFC) for iron uptake; and intacellular ferricrocin (FC) for hyphal and hydroxyferricrocin (HFC) for conidial iron distribution and storage. TAFC consists of three N(2)-acetyl-N(5)-anhydromevalonyl-N(5)-hydroxyornithine residues cyclically linked by ester bonds; FC is a cyclic hexapeptide with the structure Gly-Ser-Gly-(N(5)-acetyl-N(5)-hydroxyornithine)x3. The biosynthesis of all four siderophores depends on the hydroxylation of ornithine, catalyzed by the monooxygenase sidA. Subsequently, the pathways for biosynthesis of extra- and intracellular siderophores split. For biosynthesis of extracellular siderophores, the transacylase sidF transfers anhydromevalonyl to N(5)-hydroxyornithine. The required anhydromevalonyl-CoA moiety is derived from mevalonate by CoA ligation and dehydration catalyzed by sidI and sidH respectively. The acetylation of N(5)-hydroxyornithine for FC biosynthesis involves the constitutively expressed sidL. FC is hydroxylated to HFC by an as yet uncharacterized enzyme during conidiation. Assembly of fusarinine C (FsC) and FC is catalyzed by two different nonribosomal peptide synthetases (NRPS), sidD and sidC respectively. Subsequently, sidG catalyzes N2-acetylation of FsC for forming TAFC. Both extra- and intracellular siderophores are crucial for growth during iron limitation and virulence. This chain is Nonribosomal peptide synthetase sidD, found in Aspergillus fumigatus (strain ATCC MYA-4609 / CBS 101355 / FGSC A1100 / Af293) (Neosartorya fumigata).